The following is an 81-amino-acid chain: Short neurotoxin B (81 aa).

The N-terminal stretch at 1 to 21 is a signal peptide; sequence MKTLLLTLVVVTIVCLDLGYT. 4 cysteine pairs are disulfide-bonded: C24/C43, C38/C60, C62/C73, and C74/C79.

It belongs to the three-finger toxin family. Short-chain subfamily. Type I alpha-neurotoxin sub-subfamily. As to expression, expressed by the venom gland.

The protein localises to the secreted. Functionally, binds to muscle nicotinic acetylcholine receptor (nAChR) and inhibit acetylcholine from binding to the receptor, thereby impairing neuromuscular transmission. The chain is Short neurotoxin B from Aipysurus laevis (Olive sea snake).